The sequence spans 45 residues: Large ribosomal subunit protein bL34 (45 aa).

The span at 1–20 (MSKRTYQPNKRKRLKTHGFR) shows a compositional bias: basic residues. A disordered region spans residues 1–45 (MSKRTYQPNKRKRLKTHGFRSRMSTASGRRIISCRRRKNRETLTA).

Belongs to the bacterial ribosomal protein bL34 family.

In Tropheryma whipplei (strain Twist) (Whipple's bacillus), this protein is Large ribosomal subunit protein bL34.